The sequence spans 103 residues: uncharacterized protein (103 aa).

The helical transmembrane segment at 38 to 58 threads the bilayer; that stretch reads FTTLITIYVAAFYTGVIGAAV.

The protein localises to the membrane. This is an uncharacterized protein from Arabidopsis thaliana (Mouse-ear cress).